The sequence spans 142 residues: Hemoglobin subunit alpha (142 aa).

The region spanning 2–142 is the Globin domain; the sequence is VLSANDKSNV…VGNVLTSKYR (141 aa). O2 is bound at residue His-59. Heme b is bound at residue His-88.

It belongs to the globin family. Heterotetramer of two alpha chains and two beta chains. Red blood cells.

Its function is as follows. Involved in oxygen transport from the lung to the various peripheral tissues. The chain is Hemoglobin subunit alpha (HBA) from Aptenodytes forsteri (Emperor penguin).